The chain runs to 257 residues: MNVKLVSYTRDGEKVVAIASKMSRSRKGWDYHEKTMTDEEIEVWIRDAILHGYWSVLEHSIYTFSIEGISRVASHQLVRHRVASYTQMSHRFAKPIDEYYKPITPPSIEKRAKEIIEKAYQEAYENYFKLLQDGVPEEDARYVLPNGVNTNIVVTMNARELYNFFALRLCSRAQWEIRAIAWKMLEEVKKVHPRLFRYVGPNCIIHENFIRNEPITLDEVLQKDNIEFISQRCIEGVMRDGILKCIRNSKHVLEYLK.

The 202-residue stretch at 1–202 (MNVKLVSYTR…PRLFRYVGPN (202 aa)) folds into the ThyX domain. Residues S55, 79-81 (RHR), and Q87 contribute to the FAD site. DUMP is bound by residues 76-79 (QLVR), 87-91 (QMSHR), and R141. The ThyX motif signature appears at 79-89 (RHRVASYTQMS). FAD contacts are provided by residues 157-159 (NAR) and N163. R168 serves as a coordination point for dUMP. R168 acts as the Involved in ionization of N3 of dUMP, leading to its activation in catalysis.

This sequence belongs to the thymidylate synthase ThyX family. Homotetramer. Requires FAD as cofactor.

It carries out the reaction dUMP + (6R)-5,10-methylene-5,6,7,8-tetrahydrofolate + NADPH + H(+) = dTMP + (6S)-5,6,7,8-tetrahydrofolate + NADP(+). It functions in the pathway pyrimidine metabolism; dTTP biosynthesis. In terms of biological role, catalyzes the reductive methylation of 2'-deoxyuridine-5'-monophosphate (dUMP) to 2'-deoxythymidine-5'-monophosphate (dTMP) while utilizing 5,10-methylenetetrahydrofolate (mTHF) as the methyl donor, and NADPH and FADH(2) as the reductant. In Sulfurisphaera tokodaii (strain DSM 16993 / JCM 10545 / NBRC 100140 / 7) (Sulfolobus tokodaii), this protein is Flavin-dependent thymidylate synthase.